Here is a 255-residue protein sequence, read N- to C-terminus: Cell division protein ZapD (255 aa).

The protein belongs to the ZapD family. Interacts with FtsZ.

Its subcellular location is the cytoplasm. Cell division factor that enhances FtsZ-ring assembly. Directly interacts with FtsZ and promotes bundling of FtsZ protofilaments, with a reduction in FtsZ GTPase activity. This is Cell division protein ZapD from Methylococcus capsulatus (strain ATCC 33009 / NCIMB 11132 / Bath).